The sequence spans 387 residues: Phosphoglycerate kinase (387 aa).

Substrate contacts are provided by residues 21–23 (DLN), Arg-36, 59–62 (HLGR), Arg-113, and Arg-146. Residues Lys-197, Glu-314, and 340-343 (GGDT) contribute to the ATP site.

Belongs to the phosphoglycerate kinase family. In terms of assembly, monomer.

The protein localises to the cytoplasm. The catalysed reaction is (2R)-3-phosphoglycerate + ATP = (2R)-3-phospho-glyceroyl phosphate + ADP. It functions in the pathway carbohydrate degradation; glycolysis; pyruvate from D-glyceraldehyde 3-phosphate: step 2/5. This chain is Phosphoglycerate kinase, found in Aliivibrio fischeri (strain MJ11) (Vibrio fischeri).